We begin with the raw amino-acid sequence, 150 residues long: MEVILLDEIENFGQLGDKVKVKRGFARNFLLPKGKAVLATKKNMAYFDERRSELESKAAKAIEEAKARARAINELASLTIASKAGSEGRLFGSIGTRDIAKSLSDAGIPVMKNEVRLLNGFLRTLGEHEVHFKIYNGVFAQLKVIIISED.

This sequence belongs to the bacterial ribosomal protein bL9 family.

In terms of biological role, binds to the 23S rRNA. This is Large ribosomal subunit protein bL9 from Hamiltonella defensa subsp. Acyrthosiphon pisum (strain 5AT).